Consider the following 123-residue polypeptide: VQ motif-containing protein 29 (123 aa).

The disordered stretch occupies residues 24–55 (TKNYLTSLHSTRKQPSKPLKRPAISSPLNPMH). The span at 33 to 43 (STRKQPSKPLK) shows a compositional bias: basic residues. The VQ motif lies at 66–75 (FKVLVQRLTG). Positions 77 to 94 (PEHETVQAKPLKTSDDAA) are enriched in basic and acidic residues. The tract at residues 77-123 (PEHETVQAKPLKTSDDAAKQSSSSFAFDPSSSWGDFSFQNPANISRW) is disordered. Positions 97 to 108 (SSSSFAFDPSSS) are enriched in low complexity. A compositionally biased stretch (polar residues) spans 109 to 123 (WGDFSFQNPANISRW).

It is found in the nucleus. In terms of biological role, may function as negative regulator of flowering transition. This chain is VQ motif-containing protein 29, found in Arabidopsis thaliana (Mouse-ear cress).